Reading from the N-terminus, the 617-residue chain is Chaperone protein DnaK (617 aa).

Threonine 174 is subject to Phosphothreonine; by autocatalysis. Residues 575–592 show a composition bias toward low complexity; sequence AQAQQQAQQQAQGQQGAQ. The disordered stretch occupies residues 575-617; the sequence is AQAQQQAQQQAQGQQGAQTDNQTGQNDGKTIDVDYEEVDDDDK. The span at 593 to 602 shows a compositional bias: polar residues; sequence TDNQTGQNDG. A compositionally biased stretch (acidic residues) spans 607–617; sequence VDYEEVDDDDK.

It belongs to the heat shock protein 70 family.

Functionally, acts as a chaperone. This Halothermothrix orenii (strain H 168 / OCM 544 / DSM 9562) protein is Chaperone protein DnaK.